Reading from the N-terminus, the 449-residue chain is Tubulin alpha chain (449 aa).

Position 11 (Gln11) interacts with GTP. At Lys40 the chain carries N6-acetyllysine. 7 residues coordinate GTP: Glu71, Ser140, Gly144, Thr145, Thr179, Asn206, and Asn228. Glu71 lines the Mg(2+) pocket. Glu254 is an active-site residue.

The protein belongs to the tubulin family. As to quaternary structure, dimer of alpha and beta chains. A typical microtubule is a hollow water-filled tube with an outer diameter of 25 nm and an inner diameter of 15 nM. Alpha-beta heterodimers associate head-to-tail to form protofilaments running lengthwise along the microtubule wall with the beta-tubulin subunit facing the microtubule plus end conferring a structural polarity. Microtubules usually have 13 protofilaments but different protofilament numbers can be found in some organisms and specialized cells. Requires Mg(2+) as cofactor. Undergoes a tyrosination/detyrosination cycle, the cyclic removal and re-addition of a C-terminal tyrosine residue by the enzymes tubulin tyrosine carboxypeptidase (TTCP) and tubulin tyrosine ligase (TTL), respectively. In terms of processing, acetylation of alpha chains at Lys-40 stabilizes microtubules and affects affinity and processivity of microtubule motors. This modification has a role in multiple cellular functions, ranging from cell motility, cell cycle progression or cell differentiation to intracellular trafficking and signaling.

Its subcellular location is the cytoplasm. It is found in the cytoskeleton. It catalyses the reaction GTP + H2O = GDP + phosphate + H(+). Tubulin is the major constituent of microtubules, a cylinder consisting of laterally associated linear protofilaments composed of alpha- and beta-tubulin heterodimers. Microtubules grow by the addition of GTP-tubulin dimers to the microtubule end, where a stabilizing cap forms. Below the cap, tubulin dimers are in GDP-bound state, owing to GTPase activity of alpha-tubulin. In Tetrahymena pyriformis, this protein is Tubulin alpha chain.